Here is a 175-residue protein sequence, read N- to C-terminus: Adenine phosphoribosyltransferase (175 aa).

The protein belongs to the purine/pyrimidine phosphoribosyltransferase family. Homodimer.

The protein resides in the cytoplasm. The enzyme catalyses AMP + diphosphate = 5-phospho-alpha-D-ribose 1-diphosphate + adenine. The protein operates within purine metabolism; AMP biosynthesis via salvage pathway; AMP from adenine: step 1/1. Its function is as follows. Catalyzes a salvage reaction resulting in the formation of AMP, that is energically less costly than de novo synthesis. This is Adenine phosphoribosyltransferase from Parvibaculum lavamentivorans (strain DS-1 / DSM 13023 / NCIMB 13966).